Here is a 301-residue protein sequence, read N- to C-terminus: tRNA pseudouridine synthase B (301 aa).

Asp38 functions as the Nucleophile in the catalytic mechanism.

Belongs to the pseudouridine synthase TruB family. Type 1 subfamily.

It carries out the reaction uridine(55) in tRNA = pseudouridine(55) in tRNA. Functionally, responsible for synthesis of pseudouridine from uracil-55 in the psi GC loop of transfer RNAs. This chain is tRNA pseudouridine synthase B, found in Ehrlichia canis (strain Jake).